A 717-amino-acid chain; its full sequence is Ribosomal RNA large subunit methyltransferase K/L (717 aa).

The THUMP domain maps to 43–154; sequence IGYKACLWSR…KGKANITLDL (112 aa).

The protein belongs to the methyltransferase superfamily. RlmKL family.

It localises to the cytoplasm. The enzyme catalyses guanosine(2445) in 23S rRNA + S-adenosyl-L-methionine = N(2)-methylguanosine(2445) in 23S rRNA + S-adenosyl-L-homocysteine + H(+). It carries out the reaction guanosine(2069) in 23S rRNA + S-adenosyl-L-methionine = N(2)-methylguanosine(2069) in 23S rRNA + S-adenosyl-L-homocysteine + H(+). Its function is as follows. Specifically methylates the guanine in position 2445 (m2G2445) and the guanine in position 2069 (m7G2069) of 23S rRNA. The sequence is that of Ribosomal RNA large subunit methyltransferase K/L from Aeromonas hydrophila subsp. hydrophila (strain ATCC 7966 / DSM 30187 / BCRC 13018 / CCUG 14551 / JCM 1027 / KCTC 2358 / NCIMB 9240 / NCTC 8049).